We begin with the raw amino-acid sequence, 250 residues long: tRNA (guanine-N(1)-)-methyltransferase (250 aa).

Residues G116 and 136–141 (IGDYVL) contribute to the S-adenosyl-L-methionine site.

Belongs to the RNA methyltransferase TrmD family. Homodimer.

Its subcellular location is the cytoplasm. The enzyme catalyses guanosine(37) in tRNA + S-adenosyl-L-methionine = N(1)-methylguanosine(37) in tRNA + S-adenosyl-L-homocysteine + H(+). In terms of biological role, specifically methylates guanosine-37 in various tRNAs. This is tRNA (guanine-N(1)-)-methyltransferase from Pseudomonas savastanoi pv. phaseolicola (strain 1448A / Race 6) (Pseudomonas syringae pv. phaseolicola (strain 1448A / Race 6)).